The chain runs to 175 residues: Adenine phosphoribosyltransferase (175 aa).

This sequence belongs to the purine/pyrimidine phosphoribosyltransferase family. Homodimer.

The protein resides in the cytoplasm. The enzyme catalyses AMP + diphosphate = 5-phospho-alpha-D-ribose 1-diphosphate + adenine. Its pathway is purine metabolism; AMP biosynthesis via salvage pathway; AMP from adenine: step 1/1. Functionally, catalyzes a salvage reaction resulting in the formation of AMP, that is energically less costly than de novo synthesis. This chain is Adenine phosphoribosyltransferase, found in Synechococcus sp. (strain JA-3-3Ab) (Cyanobacteria bacterium Yellowstone A-Prime).